The following is a 178-amino-acid chain: CDP-archaeol synthase (178 aa).

5 helical membrane passes run 7–27 (LFVSFWFILPAYTANAMACIF), 56–76 (FFGVFFGIVTAIIQYLVSNLG), 91–111 (VIIGFLLSFGALFGDMFGSFL), 125–145 (VLDQITFIVFALIFVSYYYLV), and 149–169 (ISITLLILSPVVHILSNIIAY).

It belongs to the CDP-archaeol synthase family. Mg(2+) is required as a cofactor.

The protein localises to the cell membrane. It catalyses the reaction 2,3-bis-O-(geranylgeranyl)-sn-glycerol 1-phosphate + CTP + H(+) = CDP-2,3-bis-O-(geranylgeranyl)-sn-glycerol + diphosphate. It participates in membrane lipid metabolism; glycerophospholipid metabolism. In terms of biological role, catalyzes the formation of CDP-2,3-bis-(O-geranylgeranyl)-sn-glycerol (CDP-archaeol) from 2,3-bis-(O-geranylgeranyl)-sn-glycerol 1-phosphate (DGGGP) and CTP. This reaction is the third ether-bond-formation step in the biosynthesis of archaeal membrane lipids. This chain is CDP-archaeol synthase, found in Methanococcus vannielii (strain ATCC 35089 / DSM 1224 / JCM 13029 / OCM 148 / SB).